Consider the following 636-residue polypeptide: Molybdenum cofactor biosynthesis protein 1 (636 aa).

Residues 1–383 are molybdenum cofactor biosynthesis protein A; sequence MAARPLSRML…QMKNRPMILI (383 aa). S64 bears the Phosphoserine mark. In terms of domain architecture, Radical SAM core spans 64–277; the sequence is SFGRQHSYLR…LDTVRQQWPE (214 aa). R73 is a binding site for GTP. Positions 80 and 84 each coordinate [4Fe-4S] cluster. An S-adenosyl-L-methionine-binding site is contributed by Y86. C87 is a [4Fe-4S] cluster binding site. A GTP-binding site is contributed by R123. G127 serves as a coordination point for S-adenosyl-L-methionine. T154 is a GTP binding site. S178 serves as a coordination point for S-adenosyl-L-methionine. Residue K198 is modified to N6-acetyllysine. K215 lines the GTP pocket. M249 is an S-adenosyl-L-methionine binding site. [4Fe-4S] cluster contacts are provided by C312 and C315. GTP is bound at residue 317 to 319; sequence RLR. C329 contributes to the [4Fe-4S] cluster binding site. The tract at residues 414–636 is molybdenum cofactor biosynthesis protein C; sequence MSFSSQVATL…GGQRGDFHRA (223 aa). Residues 456–480 form a disordered region; sequence DANSKCLSPGSWASAAPSGPQLTSE. Positions 463-475 are enriched in low complexity; that stretch reads SPGSWASAAPSGP. K528 carries the N6-acetyllysine modification. Residue D606 is the For molybdenum cofactor biosynthesis protein C activity of the active site.

In the C-terminal section; belongs to the MoaC family. It in the N-terminal section; belongs to the radical SAM superfamily. MoaA family. In terms of assembly, isoform MOCS1A and isoform MOCS1B probably form a heterooligomer. It depends on [4Fe-4S] cluster as a cofactor. As to expression, isoform MOCS1A and isoform 2 are widely expressed.

It catalyses the reaction GTP + AH2 + S-adenosyl-L-methionine = (8S)-3',8-cyclo-7,8-dihydroguanosine 5'-triphosphate + 5'-deoxyadenosine + L-methionine + A + H(+). The enzyme catalyses (8S)-3',8-cyclo-7,8-dihydroguanosine 5'-triphosphate = cyclic pyranopterin phosphate + diphosphate. It functions in the pathway cofactor biosynthesis; molybdopterin biosynthesis. Isoform MOCS1A and isoform MOCS1B probably form a complex that catalyzes the conversion of 5'-GTP to cyclic pyranopterin monophosphate (cPMP). MOCS1A catalyzes the cyclization of GTP to (8S)-3',8-cyclo-7,8-dihydroguanosine 5'-triphosphate and MOCS1B catalyzes the subsequent conversion of (8S)-3',8-cyclo-7,8-dihydroguanosine 5'-triphosphate to cPMP. This is Molybdenum cofactor biosynthesis protein 1 (MOCS1) from Homo sapiens (Human).